The following is a 197-amino-acid chain: 3-isopropylmalate dehydratase small subunit (197 aa).

The protein belongs to the LeuD family. LeuD type 1 subfamily. As to quaternary structure, heterodimer of LeuC and LeuD.

The enzyme catalyses (2R,3S)-3-isopropylmalate = (2S)-2-isopropylmalate. The protein operates within amino-acid biosynthesis; L-leucine biosynthesis; L-leucine from 3-methyl-2-oxobutanoate: step 2/4. Catalyzes the isomerization between 2-isopropylmalate and 3-isopropylmalate, via the formation of 2-isopropylmaleate. In Streptomyces avermitilis (strain ATCC 31267 / DSM 46492 / JCM 5070 / NBRC 14893 / NCIMB 12804 / NRRL 8165 / MA-4680), this protein is 3-isopropylmalate dehydratase small subunit.